Consider the following 210-residue polypeptide: MSVSDLRQSYERGVLLEQQAAATPIDQFALWFDEAQAAQVPEPNAMTLATVDASGQPSARIVLIKAFDARGFTFFTNYTSRKGEDLLANPRAALLFFWQALERQVRIEGVVERVSADESDAYFHSRPVGSRIGAWASEQSQPITREALEARERDFKARFGDTPPRPPHWGGYRLVPTYFEFWQGRPSRLHDRLRYRPDGKQGWVMDRLSP.

Substrate-binding positions include R7 to Y10 and K65. FMN is bound by residues R60 to K65, F75 to T76, R81, K82, and Q104. Substrate-binding residues include Y122, R126, and S130. FMN contacts are provided by residues Q139–S140 and W182. Residue R188–H190 participates in substrate binding. Residue R192 participates in FMN binding.

It belongs to the pyridoxamine 5'-phosphate oxidase family. As to quaternary structure, homodimer. FMN serves as cofactor.

It carries out the reaction pyridoxamine 5'-phosphate + O2 + H2O = pyridoxal 5'-phosphate + H2O2 + NH4(+). The enzyme catalyses pyridoxine 5'-phosphate + O2 = pyridoxal 5'-phosphate + H2O2. It participates in cofactor metabolism; pyridoxal 5'-phosphate salvage; pyridoxal 5'-phosphate from pyridoxamine 5'-phosphate: step 1/1. The protein operates within cofactor metabolism; pyridoxal 5'-phosphate salvage; pyridoxal 5'-phosphate from pyridoxine 5'-phosphate: step 1/1. Catalyzes the oxidation of either pyridoxine 5'-phosphate (PNP) or pyridoxamine 5'-phosphate (PMP) into pyridoxal 5'-phosphate (PLP). This is Pyridoxine/pyridoxamine 5'-phosphate oxidase from Bordetella avium (strain 197N).